A 199-amino-acid polypeptide reads, in one-letter code: Charged multivesicular body protein 1b (199 aa).

Coiled-coil stretches lie at residues 8 to 42 and 178 to 199; these read LFNL…AIQK and TSVA…RDQV. The interval 167 to 199 is disordered; it reads ELPQGQTGSVGTSVASTEQDELSQRLARLRDQV. Over residues 170-183 the composition is skewed to polar residues; the sequence is QGQTGSVGTSVAST. The MIT-interacting motif signature appears at 186 to 196; the sequence is DELSQRLARLR.

The protein belongs to the SNF7 family. In terms of assembly, probable peripherally associated component of the endosomal sorting required for transport complex III (ESCRT-III).

The protein localises to the cytoplasm. The protein resides in the cytosol. It is found in the endosome. Its subcellular location is the late endosome membrane. In terms of biological role, probable peripherally associated component of the endosomal sorting required for transport complex III (ESCRT-III) which is involved in multivesicular bodies (MVBs) formation and sorting of endosomal cargo proteins into MVBs. MVBs contain intraluminal vesicles (ILVs) that are generated by invagination and scission from the limiting membrane of the endosome and mostly are delivered to lysosomes enabling degradation of membrane proteins, such as stimulated growth factor receptors, lysosomal enzymes and lipids. In Xenopus laevis (African clawed frog), this protein is Charged multivesicular body protein 1b (chmp1b).